The sequence spans 1262 residues: Clustered mitochondria protein homolog (1262 aa).

Residues M1–T47 form a disordered region. Residues S31–D40 show a composition bias toward polar residues. The region spanning A335–L580 is the Clu domain.

The protein belongs to the CLU family.

The protein localises to the cytoplasm. MRNA-binding protein involved in proper cytoplasmic distribution of mitochondria. The sequence is that of Clustered mitochondria protein homolog from Caenorhabditis briggsae.